A 163-amino-acid chain; its full sequence is MVILGIDPGYGRIGYGVLEKKGNMFNLIDYGVIYTSKEDELPKRLLNIDEQLRNLIETYKPDESAVEKLYFFKNVATAIQVGEARGVILLCLEKENIPIYEYTPFQIKQAVTGYGRAEKGQIQRTLKLLLKLEKTPTPDDAADALATAFCHGNFRRSFKNAGY.

Residues aspartate 7, glutamate 67, and aspartate 140 contribute to the active site. Mg(2+) is bound by residues aspartate 7, glutamate 67, and aspartate 140.

This sequence belongs to the RuvC family. Homodimer which binds Holliday junction (HJ) DNA. The HJ becomes 2-fold symmetrical on binding to RuvC with unstacked arms; it has a different conformation from HJ DNA in complex with RuvA. In the full resolvosome a probable DNA-RuvA(4)-RuvB(12)-RuvC(2) complex forms which resolves the HJ. Mg(2+) is required as a cofactor.

The protein resides in the cytoplasm. The enzyme catalyses Endonucleolytic cleavage at a junction such as a reciprocal single-stranded crossover between two homologous DNA duplexes (Holliday junction).. Functionally, the RuvA-RuvB-RuvC complex processes Holliday junction (HJ) DNA during genetic recombination and DNA repair. Endonuclease that resolves HJ intermediates. Cleaves cruciform DNA by making single-stranded nicks across the HJ at symmetrical positions within the homologous arms, yielding a 5'-phosphate and a 3'-hydroxyl group; requires a central core of homology in the junction. The consensus cleavage sequence is 5'-(A/T)TT(C/G)-3'. Cleavage occurs on the 3'-side of the TT dinucleotide at the point of strand exchange. HJ branch migration catalyzed by RuvA-RuvB allows RuvC to scan DNA until it finds its consensus sequence, where it cleaves and resolves the cruciform DNA. This Petrotoga mobilis (strain DSM 10674 / SJ95) protein is Crossover junction endodeoxyribonuclease RuvC.